The primary structure comprises 865 residues: SWI/SNF chromatin-remodeling complex subunit sol1 (865 aa).

Disordered stretches follow at residues 1–34, 54–92, 116–143, and 163–183; these read MNNQ…QPAY, MMNT…ASNG, QEKE…QSRE, and VRQT…ANQL. The span at 17-30 shows a compositional bias: polar residues; the sequence is SYPTQGQSYNTQEE. Residues 121 to 139 show a composition bias toward low complexity; it reads AMQQQQQQQQQQQLYQRQM. The ARID domain occupies 188-278; sequence AASFDKFMVS…YLLPYEEAWL (91 aa). The disordered stretch occupies residues 288-380; that stretch reads QQAKANHSAN…QTSSSAAPVD (93 aa). The span at 328-353 shows a compositional bias: polar residues; the sequence is HSKSPSPAFTANRFSPAAPTTVSSER. Residues 356–368 are compositionally biased toward pro residues; sequence PPYPSAPTRPTPP. S852 and S855 each carry phosphoserine.

The protein belongs to the SWI1 family. In terms of assembly, component of the SWI/SNF global transcription activator complex composed of at least arp9, arp42, snf5, snf22, snf30, sbf59, sol1, ssr1, ssr2, ssr3, ssr4 and tfg3.

It localises to the nucleus. Functionally, component of the SWI/SNF complex, an ATP-dependent chromatin remodeling complex, required for the positive and negative regulation of gene expression of a large number of genes. It changes chromatin structure by altering DNA-histone contacts within a nucleosome, leading eventually to a change in nucleosome position, thus facilitating or repressing binding of gene-specific transcription factors. The sequence is that of SWI/SNF chromatin-remodeling complex subunit sol1 (sol1) from Schizosaccharomyces pombe (strain 972 / ATCC 24843) (Fission yeast).